Here is a 299-residue protein sequence, read N- to C-terminus: MANFPASLLILNGKSADNQPLREAITLLRDEGIQIHVRVTWEKGDAQRYVDEARRLGVETVIAGGGDGTINEVSTALIQIRDGVAPALGLLPLGTANDFATSAGIPEALDKALKLAIAGNAMEIDMARVNDKTCFINMATGGFGTRITTETPEKLKAALGGVSYLIHGLMRMDTLTPDRCEIRGENFHWQGDALVIGIGNGRQAGGGQQLCPTALINDGLLQLRIFTGEELLPALFSTLTQSDDNPNIIDGASAWFDIHAPHEITFNLDGEPLSGQEFHIEVLPGALRCRLPPDCPLLR.

The DAGKc domain occupies 2–133 (ANFPASLLIL…IDMARVNDKT (132 aa)). ATP-binding positions include Thr-40, 66–72 (GDGTINE), and Thr-95. Leu-215, Asp-218, and Leu-220 together coordinate Mg(2+). Glu-271 functions as the Proton acceptor in the catalytic mechanism.

It belongs to the diacylglycerol/lipid kinase family. YegS lipid kinase subfamily. The cofactor is Mg(2+). It depends on Ca(2+) as a cofactor.

The protein localises to the cytoplasm. Its function is as follows. Probably phosphorylates lipids; the in vivo substrate is unknown. In Salmonella agona (strain SL483), this protein is Probable lipid kinase YegS.